A 595-amino-acid polypeptide reads, in one-letter code: Elongation factor 4 2 (595 aa).

A tr-type G domain is found at 4-187 (SHIRNFAIIA…AIKQRLPAPQ (184 aa)). Residues 16–21 (DHGKST) and 133–136 (NKVD) each bind GTP.

Belongs to the TRAFAC class translation factor GTPase superfamily. Classic translation factor GTPase family. LepA subfamily.

It localises to the cell membrane. It carries out the reaction GTP + H2O = GDP + phosphate + H(+). Functionally, required for accurate and efficient protein synthesis under certain stress conditions. May act as a fidelity factor of the translation reaction, by catalyzing a one-codon backward translocation of tRNAs on improperly translocated ribosomes. Back-translocation proceeds from a post-translocation (POST) complex to a pre-translocation (PRE) complex, thus giving elongation factor G a second chance to translocate the tRNAs correctly. Binds to ribosomes in a GTP-dependent manner. This Lactiplantibacillus plantarum (strain ATCC BAA-793 / NCIMB 8826 / WCFS1) (Lactobacillus plantarum) protein is Elongation factor 4 2.